The sequence spans 465 residues: Ribulose bisphosphate carboxylase large chain (465 aa).

An N6,N6,N6-trimethyllysine modification is found at K4. 2 residues coordinate substrate: N113 and T163. K165 (proton acceptor) is an active-site residue. Residue K167 participates in substrate binding. Mg(2+) contacts are provided by K191, D193, and E194. At K191 the chain carries N6-carboxylysine. H284 acts as the Proton acceptor in catalysis. 3 residues coordinate substrate: R285, H317, and S369.

The protein belongs to the RuBisCO large chain family. Type I subfamily. As to quaternary structure, heterohexadecamer of 8 large chains and 8 small chains; disulfide-linked. The disulfide link is formed within the large subunit homodimers. Mg(2+) is required as a cofactor. The disulfide bond which can form in the large chain dimeric partners within the hexadecamer appears to be associated with oxidative stress and protein turnover.

It localises to the plastid. The protein resides in the chloroplast. It carries out the reaction 2 (2R)-3-phosphoglycerate + 2 H(+) = D-ribulose 1,5-bisphosphate + CO2 + H2O. The enzyme catalyses D-ribulose 1,5-bisphosphate + O2 = 2-phosphoglycolate + (2R)-3-phosphoglycerate + 2 H(+). Functionally, ruBisCO catalyzes two reactions: the carboxylation of D-ribulose 1,5-bisphosphate, the primary event in carbon dioxide fixation, as well as the oxidative fragmentation of the pentose substrate in the photorespiration process. Both reactions occur simultaneously and in competition at the same active site. This Hamamelis mollis (Chinese witch hazel) protein is Ribulose bisphosphate carboxylase large chain.